Consider the following 492-residue polypeptide: Endoglucanase 15 (492 aa).

Residues 1-30 (MSCISSQCFITIKSICIVLLLSITCGAVSA) form the signal peptide. Residue Asp86 is the Nucleophile of the active site. Residues His414, Asp466, and Glu475 contribute to the active site.

It belongs to the glycosyl hydrolase 9 (cellulase E) family.

Its subcellular location is the secreted. The catalysed reaction is Endohydrolysis of (1-&gt;4)-beta-D-glucosidic linkages in cellulose, lichenin and cereal beta-D-glucans.. This chain is Endoglucanase 15, found in Arabidopsis thaliana (Mouse-ear cress).